Consider the following 1003-residue polypeptide: Pumilio homolog 4 (1003 aa).

Positions 38–65 (QHRNQQSFGRERERDIDVHRSGSAPPTV) are disordered. Residues 46 to 57 (GRERERDIDVHR) show a composition bias toward basic and acidic residues. Serine 225 is modified (phosphoserine). Residues 285-300 (KNSPNTMLGSTMSSPV) show a composition bias toward polar residues. The interval 285-328 (KNSPNTMLGSTMSSPVPRNRTPDSHLVGRSTASGLPPIGTRVGP) is disordered. Threonine 305 carries the phosphothreonine modification. One can recognise a PUM-HD domain in the interval 644–984 (AEASLLEGFK…HIVARVEKLI (341 aa)). Pumilio repeat units lie at residues 664–699 (EIVGHVIEFSMDQYGSRFIQQKLETATDEEKNAIFP), 700–735 (EILPYGRTLMTDVFGNYVIQKFFEHGTTKQRKELAE), 736–771 (QVTGHVLALSLQMYGCRVIQKALEVVELEQQARMVK), 772–807 (ELDGSVMKCVHDQNGNHVIQKCIERLPQDWIQFIIS), 808–843 (SFYGKVLALSTHPYGCRVIQRVLEHIDDIETQRIIM), 845–880 (EIMDSVCTLAQDQYGNYVIQHIIQHGKPHERSEIIN), 881–916 (KLAGQIVKMSQQKFASNVVEKCLTFGGPEERQVLVN), and 917–958 (EMLG…LILS).

It is found in the cytoplasm. Sequence-specific RNA-binding protein that regulates translation and mRNA stability by binding the 3'-UTR of target mRNAs. Binds the APUM-binding elements (APBEs) in the 3'-UTR mRNA sequence of CLV1, PNH, WUS and FAS2. This is Pumilio homolog 4 (APUM4) from Arabidopsis thaliana (Mouse-ear cress).